The primary structure comprises 1041 residues: MAAAAAAGAASGLPGPVAQGLKEALVDTLTGILSPVQEVRAAAEEQIKVLEVTEEFGVHLAELTVDPQGALAIRQLASVILKQYVETHWCAQSEKFRPPETTERAKIVIRELLPNGLRESISKVRSSVAYAVSAIAHWDWPEAWPQLFNLLMEMLVSGDLNAVHGAMRVLTEFTREVTDTQMPLVAPVILPEMYKIFTMAEVYGIRTRSRAVEIFTTCAHMICNMEELEKGAAKVLIFPVVQQFTEAFVQALQIPDGPTSDSGFKMEVLKAVTALVKNFPKHMVSSMQQILPIVWNTLTESAAFYVRTEVNYTEEVEDPVDSDGEVLGFENLVFSIFEFVHALLENSKFKSTVKKALPELIYYIILYMQITEEQIKVWTANPQQFVEDEDDDTFSYTVRIAAQDLLLAVATDFQNESAAALAAAATRHLQEAEQTKNSGTEHWWKIHEACMLALGSVKAIITDSVKNGRIHFDMHGFLTNVILADLNLSVSPFLLGRALWAASRFTVAMSPELIQQFLQATVSGLHETQPPSVRISAVRAIWGYCDQLKVSESTHVLQPFLPSILDGLIHLAAQFSSEVLNLVMETLCIVCTVDPEFTASMESKICPFTIAIFLKYSNDPVVASLAQDIFKELSQIEACQGPMQMRLIPTLVSIMQAPADKIPAGLCATAIDILTTVVRNTKPPLSQLLICQAFPAVAQCTLHTDDNATMQNGGECLRAYVSVTLEQVAQWHDEQGHNGLWYVMQVVSQLLDPRTSEFTAAFVGRLVSTLISKAGRELGENLDQILRAILSKMQQAETLSVMQSLIMVFAHLVHTQLEPLLEFLCSLPGPTGKPALEFVMAEWTSRQHLFYGQYEGKVSSVALCKLLQHGINADDKRLQDIRVKGEEIYSMDEGIRTRSKSAKNPERWTNIPLLVKILKLIINELSNVMEANAARQATPAEWSQDDSNDMWEDQEEEEEEEEDGLAGQLLSDILATSKYEEDYYEDDEEDDPDALKDPLYQIDLQAYLTDFLCQFAQQPCYIMFSGHLNDNERRVLQTIGI.

A2 bears the N-acetylalanine mark. The Importin N-terminal domain maps to 43 to 119 (AEEQIKVLEV…RELLPNGLRE (77 aa)). The interval 936–967 (QATPAEWSQDDSNDMWEDQEEEEEEEEDGLAG) is disordered. Acidic residues predominate over residues 943 to 964 (SQDDSNDMWEDQEEEEEEEEDG).

It belongs to the importin beta family. As to quaternary structure, interacts with histones H2A, H2B, H3 and H4. The binding is coupled to RanGTP cycles. Interacts with AKIRIN2; promoting association with pre-assembled proteasomes. Associates with pre-assembled proteasomes; interaction is indirect and mediated via interaction with AKIRIN2. Interacts with PPP2R1A and PPP2R1B.

It localises to the cytoplasm. Its subcellular location is the nucleus. Nuclear transport receptor that mediates nuclear import of proteins, such as histones, proteasome and actin. Serves as receptor for nuclear localization signals (NLS) in cargo substrates. Is thought to mediate docking of the importin/substrate complex to the nuclear pore complex (NPC) through binding to nucleoporin and the complex is subsequently translocated through the pore by an energy requiring, Ran-dependent mechanism. At the nucleoplasmic side of the NPC, Ran binds to the importin, the importin/substrate complex dissociates and importin is re-exported from the nucleus to the cytoplasm where GTP hydrolysis releases Ran. The directionality of nuclear import is thought to be conferred by an asymmetric distribution of the GTP- and GDP-bound forms of Ran between the cytoplasm and nucleus. Mediates the import of pre-assembled proteasomes into the nucleus; AKIRIN2 acts as a molecular bridge between IPO9 and the proteasome complex. Mediates the nuclear import of histones H2A, H2B, H4 and H4. In addition to nuclear import, also acts as a chaperone for histones by preventing inappropriate non-nucleosomal interactions. Mediates the nuclear import of actin. This chain is Importin-9, found in Homo sapiens (Human).